The sequence spans 137 residues: Small ribosomal subunit protein bS6 (137 aa).

The segment at 96–137 is disordered; sequence ITEASPMAKAKDERDTRRSSEERAPRAEATEEVKESAENTAE. Residues 104–137 are compositionally biased toward basic and acidic residues; the sequence is KAKDERDTRRSSEERAPRAEATEEVKESAENTAE.

Belongs to the bacterial ribosomal protein bS6 family.

Binds together with bS18 to 16S ribosomal RNA. This Shewanella piezotolerans (strain WP3 / JCM 13877) protein is Small ribosomal subunit protein bS6.